Reading from the N-terminus, the 481-residue chain is Argininosuccinate lyase (481 aa).

It belongs to the lyase 1 family. Argininosuccinate lyase subfamily.

It is found in the cytoplasm. It catalyses the reaction 2-(N(omega)-L-arginino)succinate = fumarate + L-arginine. It participates in amino-acid biosynthesis; L-arginine biosynthesis; L-arginine from L-ornithine and carbamoyl phosphate: step 3/3. The sequence is that of Argininosuccinate lyase from Methanococcus maripaludis (strain C7 / ATCC BAA-1331).